The primary structure comprises 73 residues: Defensin-like protein 34 (73 aa).

The signal sequence occupies residues 1-25; the sequence is MASNKVSFFLVLCLCVLSTAEFGEA. 3 cysteine pairs are disulfide-bonded: Cys-33–Cys-59, Cys-45–Cys-68, and Cys-49–Cys-70.

It belongs to the DEFL family.

The protein resides in the secreted. This Arabidopsis thaliana (Mouse-ear cress) protein is Defensin-like protein 34.